Reading from the N-terminus, the 83-residue chain is Normal mucosa of esophagus-specific gene 1 protein (83 aa).

Belongs to the complex I NDUFA4 subunit family. In terms of tissue distribution, expressed mainly in stomach, placenta, small intestine and colon, as well as in normal mucosa of esophagus. Down-regulated in esophageal squamous cell carcinoma.

The protein localises to the nucleus. The chain is Normal mucosa of esophagus-specific gene 1 protein (NMES1) from Homo sapiens (Human).